A 2122-amino-acid chain; its full sequence is Pecanex-like protein 2 (2122 aa).

The next 2 helical transmembrane spans lie at 36 to 53 (LYLW…HLAF) and 60 to 82 (ALFY…YRLH). Disordered stretches follow at residues 92 to 164 (QHRS…ELPA) and 180 to 250 (QPEA…LVNP). Polar residues-rich tracts occupy residues 146 to 157 (SRGQSVHSQHSS) and 185 to 203 (ASST…SQGR). An N-linked (GlcNAc...) asparagine glycan is attached at Asn-288. Composition is skewed to low complexity over residues 392–407 (VTSS…AESA) and 458–476 (PDRC…PGST). Disordered regions lie at residues 392-556 (VTSS…QIPN) and 575-634 (VVAP…PVFT). Residues 528–538 (STKEVVSDGEK) show a composition bias toward basic and acidic residues. Residue Asn-556 is glycosylated (N-linked (GlcNAc...) asparagine). Basic and acidic residues predominate over residues 599–618 (TKEEAVENEKPNGRDPKPGK). The span at 625–634 (DPANGSPVFT) shows a compositional bias: polar residues. The next 13 membrane-spanning stretches (helical) occupy residues 825–845 (VAVL…NRGF), 849–869 (LWVL…LKSV), 882–902 (QIIA…ILLL), 933–953 (HLIV…FPQI), 976–998 (GITS…HAFC), 1010–1030 (HIPA…YHLS), 1080–1100 (LVIC…TVFL), 1105–1125 (FLSI…HHLL), 1174–1194 (YLLY…SISN), 1218–1238 (SFCN…FFHF), 1245–1265 (ESFL…GDLL), 1270–1290 (FVLA…HVFA), and 1305–1325 (TFAT…VIFI). Asn-1393, Asn-1534, and Asn-1802 each carry an N-linked (GlcNAc...) asparagine glycan. Disordered regions lie at residues 1858–1943 (SVGQ…SSGP) and 1955–1991 (STSV…TTGH). The segment covering 1888-1898 (ESRDGSTEQPR) has biased composition (basic and acidic residues). Positions 1922-1942 (SQSVQAHSAISQRPPTLSSSG) are enriched in polar residues. The segment covering 1968-1981 (SRLSLHTSAASLHS) has biased composition (low complexity). N-linked (GlcNAc...) asparagine glycosylation occurs at Asn-2039. The segment at 2097 to 2122 (VLCRRASQEDMGLDDTASQQSTSDEQ) is disordered. Residues 2112 to 2122 (TASQQSTSDEQ) show a composition bias toward polar residues.

This sequence belongs to the pecanex family.

The protein resides in the membrane. May play a role in tumorigenesis. The sequence is that of Pecanex-like protein 2 from Mus musculus (Mouse).